A 335-amino-acid polypeptide reads, in one-letter code: Pro-cathepsin H (335 aa).

The first 22 residues, 1 to 22 (MWAVLPLLCAGAWLLGAPACGA), serve as a signal peptide directing secretion. A propeptide spans 23-97 (AELAANSLEK…DELKRKYLWS (75 aa)) (activation peptide). Asn-72 and Asn-101 each carry an N-linked (GlcNAc...) asparagine glycan. Cystine bridges form between Cys-102/Cys-327, Cys-138/Cys-181, Cys-172/Cys-214, and Cys-272/Cys-322. Residues 106–115 (KSNYLRGTGP) constitute a propeptide that is removed on maturation. The active site involves Cys-141. A glycan (N-linked (GlcNAc...) asparagine) is linked at Asn-230. Residues His-281 and Asn-301 contribute to the active site.

The protein belongs to the peptidase C1 family. Composed of a mini chain and a large chain. The large chain may be split into heavy and light chain. All chains are held together by disulfide bonds.

The protein resides in the lysosome. The catalysed reaction is Hydrolysis of proteins, acting as an aminopeptidase (notably, cleaving Arg-|-Xaa bonds) as well as an endopeptidase.. Important for the overall degradation of proteins in lysosomes. This chain is Pro-cathepsin H (CTSH), found in Bos taurus (Bovine).